The following is a 107-amino-acid chain: Thiosulfate sulfurtransferase GlpE (107 aa).

The Rhodanese domain occupies 17-105; the sequence is RQGEAVLVDI…WLKAFPLETE (89 aa). Cys-65 functions as the Cysteine persulfide intermediate in the catalytic mechanism.

This sequence belongs to the GlpE family.

The protein resides in the cytoplasm. It catalyses the reaction thiosulfate + hydrogen cyanide = thiocyanate + sulfite + 2 H(+). The enzyme catalyses thiosulfate + [thioredoxin]-dithiol = [thioredoxin]-disulfide + hydrogen sulfide + sulfite + 2 H(+). Its function is as follows. Transferase that catalyzes the transfer of sulfur from thiosulfate to thiophilic acceptors such as cyanide or dithiols. May function in a CysM-independent thiosulfate assimilation pathway by catalyzing the conversion of thiosulfate to sulfite, which can then be used for L-cysteine biosynthesis. The polypeptide is Thiosulfate sulfurtransferase GlpE (Sodalis glossinidius (strain morsitans)).